A 534-amino-acid chain; its full sequence is Glucans biosynthesis protein D (534 aa).

The tat-type signal signal peptide spans 1-30 (MRMQRRHLLKNAAAALAALGLPALPQWALA).

Belongs to the OpgD/OpgG family. Post-translationally, predicted to be exported by the Tat system. The position of the signal peptide cleavage has not been experimentally proven.

Its subcellular location is the periplasm. The protein operates within glycan metabolism; osmoregulated periplasmic glucan (OPG) biosynthesis. Its function is as follows. Probably involved in the control of the structural glucose backbone of osmoregulated periplasmic glucans (OPGs). The sequence is that of Glucans biosynthesis protein D from Xanthomonas oryzae pv. oryzae (strain KACC10331 / KXO85).